We begin with the raw amino-acid sequence, 896 residues long: Translation initiation factor IF-2 (896 aa).

The disordered stretch occupies residues 46–315 (LAHLNRQHGG…FNKPAQPVER (270 aa)). Over residues 99 to 247 (SASEEQEREE…RKQQEKEDVH (149 aa)) the composition is skewed to basic and acidic residues. Over residues 269 to 278 (SRKRGKKRRR) the composition is skewed to basic residues. The segment covering 279-288 (KDEESDDTPR) has biased composition (basic and acidic residues). A tr-type G domain is found at 396 to 565 (PRAPVVTVMG…LLQSEVLDLR (170 aa)). Positions 405–412 (GHVDHGKT) are G1. A GTP-binding site is contributed by 405-412 (GHVDHGKT). The segment at 430–434 (GITQH) is G2. The segment at 451–454 (DTPG) is G3. GTP is bound by residues 451–455 (DTPGH) and 505–508 (NKMD). A G4 region spans residues 505–508 (NKMD). The segment at 541–543 (SAH) is G5.

Belongs to the TRAFAC class translation factor GTPase superfamily. Classic translation factor GTPase family. IF-2 subfamily.

The protein localises to the cytoplasm. In terms of biological role, one of the essential components for the initiation of protein synthesis. Protects formylmethionyl-tRNA from spontaneous hydrolysis and promotes its binding to the 30S ribosomal subunits. Also involved in the hydrolysis of GTP during the formation of the 70S ribosomal complex. This is Translation initiation factor IF-2 from Idiomarina loihiensis (strain ATCC BAA-735 / DSM 15497 / L2-TR).